Here is a 645-residue protein sequence, read N- to C-terminus: Threonine--tRNA ligase (645 aa).

In terms of domain architecture, TGS spans 1–63 (MEQINIQFPD…ETDGSIEIVT (63 aa)). Residues 242–540 (DHRKIGKELE…LTEETKGAFP (299 aa)) are catalytic. Zn(2+) is bound by residues Cys336, His387, and His517.

Belongs to the class-II aminoacyl-tRNA synthetase family. In terms of assembly, homodimer. The cofactor is Zn(2+).

It localises to the cytoplasm. It carries out the reaction tRNA(Thr) + L-threonine + ATP = L-threonyl-tRNA(Thr) + AMP + diphosphate + H(+). Catalyzes the attachment of threonine to tRNA(Thr) in a two-step reaction: L-threonine is first activated by ATP to form Thr-AMP and then transferred to the acceptor end of tRNA(Thr). Also edits incorrectly charged L-seryl-tRNA(Thr). In Staphylococcus aureus (strain NCTC 8325 / PS 47), this protein is Threonine--tRNA ligase.